The chain runs to 328 residues: Gonadotropin-releasing hormone receptor (328 aa).

The Extracellular portion of the chain corresponds to 1-38; it reads MANSASPEQNQNHCSASNSSIPLTQANLPTLTLSGKIR. Asn18 carries N-linked (GlcNAc...) asparagine glycosylation. Residues 39-59 traverse the membrane as a helical segment; sequence VTVTFFLFLLSTTFNASFLLK. Topologically, residues 60 to 84 are cytoplasmic; the sequence is LHKWTQKKENGKKLSKMKVLLKHLT. Residues 85-105 traverse the membrane as a helical segment; that stretch reads LANLLETLIVMPLDGMWNITV. Over 106–115 the chain is Extracellular; it reads QWYAGELLCK. Cys114 and Cys196 are disulfide-bonded. The helical transmembrane segment at 116 to 136 threads the bilayer; it reads VLSYLKLFSMYAPAFMMVVIS. At 137 to 157 the chain is on the cytoplasmic side; sequence LDRSLAITRPLAVKSNSKLGR. The helical transmembrane segment at 158-178 threads the bilayer; it reads SMIGLAWLLSSIFAGPQLYIF. Residues 179 to 208 lie on the Extracellular side of the membrane; sequence RMIHLADSSGQTEGFSQCVTHCSFPQWWHQ. A helical membrane pass occupies residues 209-229; sequence AFYNFFTFSCLFIIPLLFMLI. Topologically, residues 230 to 271 are cytoplasmic; the sequence is CNAKIIFTLTRVLHQDPHKLQLNQSKNNIPRARLRTLKMTVA. The chain crosses the membrane as a helical span at residues 272 to 292; that stretch reads FATSFTVCWTPYYVLGIWYWF. Topologically, residues 293-306 are extracellular; the sequence is DPEMLNRVSDPVNH. Residues 307–327 traverse the membrane as a helical segment; it reads FFFLFALLNPCFDPLIYGYFS. Position 328 (Leu328) is a topological domain, cytoplasmic.

It belongs to the G-protein coupled receptor 1 family.

The protein resides in the cell membrane. Receptor for gonadotropin releasing hormone (GnRH) that mediates the action of GnRH to stimulate the secretion of the gonadotropic hormones luteinizing hormone (LH) and follicle-stimulating hormone (FSH). This receptor mediates its action by association with G-proteins that activate a phosphatidylinositol-calcium second messenger system. The polypeptide is Gonadotropin-releasing hormone receptor (GNRHR) (Equus caballus (Horse)).